The sequence spans 433 residues: Deoxyguanosinetriphosphate triphosphohydrolase-like protein 2 (433 aa).

Positions 61–248 constitute an HD domain; sequence RLTHSLEVAQ…METADDIAYT (188 aa).

This sequence belongs to the dGTPase family. Type 2 subfamily.

The polypeptide is Deoxyguanosinetriphosphate triphosphohydrolase-like protein 2 (Deinococcus radiodurans (strain ATCC 13939 / DSM 20539 / JCM 16871 / CCUG 27074 / LMG 4051 / NBRC 15346 / NCIMB 9279 / VKM B-1422 / R1)).